A 142-amino-acid polypeptide reads, in one-letter code: Ribosome maturation factor RimP (142 aa).

Belongs to the RimP family.

The protein resides in the cytoplasm. Its function is as follows. Required for maturation of 30S ribosomal subunits. The protein is Ribosome maturation factor RimP of Aromatoleum aromaticum (strain DSM 19018 / LMG 30748 / EbN1) (Azoarcus sp. (strain EbN1)).